The sequence spans 373 residues: Alcohol dehydrogenase class-3 (373 aa).

Residue A1 is modified to N-acetylalanine. 7 residues coordinate Zn(2+): C44, H66, C96, C99, C102, C110, and C173.

Belongs to the zinc-containing alcohol dehydrogenase family. Class-III subfamily. In terms of assembly, homodimer. Requires Zn(2+) as cofactor.

Its subcellular location is the cytoplasm. The enzyme catalyses a primary alcohol + NAD(+) = an aldehyde + NADH + H(+). The catalysed reaction is a secondary alcohol + NAD(+) = a ketone + NADH + H(+). It catalyses the reaction S-(hydroxymethyl)glutathione + NADP(+) = S-formylglutathione + NADPH + H(+). It carries out the reaction S-(hydroxymethyl)glutathione + NAD(+) = S-formylglutathione + NADH + H(+). The enzyme catalyses S-nitrosoglutathione + NADH + H(+) = S-(hydroxysulfenamide)glutathione + NAD(+). Class-III ADH is remarkably ineffective in oxidizing ethanol, but it readily catalyzes the oxidation of long-chain primary alcohols and the oxidation of S-(hydroxymethyl) glutathione. Also acts as a S-nitroso-glutathione reductase by catalyzing the NADH-dependent reduction of S-nitrosoglutathione, thereby regulating protein S-nitrosylation. The sequence is that of Alcohol dehydrogenase class-3 from Saara hardwickii (Indian spiny-tailed lizard).